The following is a 359-amino-acid chain: Fc receptor-like A (359 aa).

The signal sequence occupies residues 1–27 (MKLGCVLMAWALYLSLGVLWVAQMLLA). 2 Ig-like C2-type domains span residues 70-159 (PFHL…ETAS) and 170-257 (PAPI…PQLE). Disulfide bonds link Cys99-Cys143 and Cys192-Cys240. Positions 259-313 (RVQGASSSAAPPTLNPAPQKSAAPGTAPEEAPGPLPPPPTPSSEDPGFSSPLGMP) are disordered. Residues 279-288 (SAAPGTAPEE) show a composition bias toward low complexity. Pro residues predominate over residues 289–299 (APGPLPPPPTP).

In terms of assembly, monomer or homodimer; disulfide-linked. In terms of tissue distribution, expressed specifically in primary and secondary lymphoid tissues like lymph node, spleen and tonsil. Specifically expressed in B-cells with a high level in normal germinal center B-cells, centroblasts and in a subset of diffuse large B-cell lymphomas. Highly expressed in bone marrow B-cells and weakly in earlier B lineage cells. Expressed in pre-germinal and germinal center B-cells in secondary lymphoid tissues. Also expressed in melanoma and melanocytes.

It localises to the cytoplasm. May be implicated in B-cell differentiation and lymphomagenesis. The sequence is that of Fc receptor-like A (FCRLA) from Homo sapiens (Human).